A 261-amino-acid chain; its full sequence is Type III pantothenate kinase (261 aa).

6–13 (DAGNTNVV) contributes to the ATP binding site. 108–111 (GADR) is a substrate binding site. Asp-110 acts as the Proton acceptor in catalysis. Asp-130 serves as a coordination point for K(+). Thr-133 serves as a coordination point for ATP. Thr-185 is a binding site for substrate.

The protein belongs to the type III pantothenate kinase family. In terms of assembly, homodimer. NH4(+) serves as cofactor. It depends on K(+) as a cofactor.

The protein resides in the cytoplasm. It catalyses the reaction (R)-pantothenate + ATP = (R)-4'-phosphopantothenate + ADP + H(+). Its pathway is cofactor biosynthesis; coenzyme A biosynthesis; CoA from (R)-pantothenate: step 1/5. Catalyzes the phosphorylation of pantothenate (Pan), the first step in CoA biosynthesis. The chain is Type III pantothenate kinase from Rhodospirillum centenum (strain ATCC 51521 / SW).